A 453-amino-acid chain; its full sequence is MHGSTGFVQGTRPAGDQADPLPVVRVSSESMTRYALYFTPVDDSPWAQAGSSWLGRHPASPEPVQQVNIPGIPRILLSSLTADARRYGFHATLKAPFRLFEGFNEEHLLQMARAFCAAQKAIVLDEVRVRPLMDFLALQVNGPLDEIGGLAMRCVTYFDLLRAPLTEPELAKRRRAGLNARQSALLQRWGYPYTEEFYRFHMTLTDALMHADADVIFTIRKAAEQHFAAAVAAVPLAIDALTIAREEYPGAPFVEWQRIPFSGQGERASLPHSGRIFFCVGPSGVGKDSLLNWVREHSAGDEKLVFAQRTITRATQANEAHEAVDTASFWRLAAGGQFAMVWQANDLCYGIRRGIEADLKAGRDVVINGSRAYVPQLLQAFPDAIVIWIDASENLLRERLEARQREQGPALLKRLKRAKEFAPSEQAQVIRLDNSGALEAGGQKLLDILRQAK.

Positions 1–21 (MHGSTGFVQGTRPAGDQADPL) are disordered. The tract at residues 1 to 271 (MHGSTGFVQG…SGQGERASLP (271 aa)) is unknown. Positions 272 to 453 (HSGRIFFCVG…KLLDILRQAK (182 aa)) are ribose 1,5-bisphosphokinase.

It in the C-terminal section; belongs to the ribose 1,5-bisphosphokinase family.

The catalysed reaction is alpha-D-ribose 1,5-bisphosphate + ATP = 5-phospho-alpha-D-ribose 1-diphosphate + ADP. It functions in the pathway metabolic intermediate biosynthesis; 5-phospho-alpha-D-ribose 1-diphosphate biosynthesis; 5-phospho-alpha-D-ribose 1-diphosphate from D-ribose 5-phosphate (route II): step 3/3. Catalyzes the phosphorylation of ribose 1,5-bisphosphate to 5-phospho-D-ribosyl alpha-1-diphosphate (PRPP). This Janthinobacterium sp. (strain Marseille) (Minibacterium massiliensis) protein is Ribose 1,5-bisphosphate phosphokinase PhnN (phnN).